The following is a 291-amino-acid chain: MLRPRGAEGTAVALLRLLLLLLLLGPKLRGPGLGVVGAAGAGLPESVIWAVNAGGEAHVDVHGIHFRKDPLEGRVGRASDYGMKLPILRSTPEDQILYQTERYNEETFGYEVPVKEEGDYVLVLKFAEVYFAQSQQKVFDVRLNGHVVVKDLDIFDRVGHSTAHDEIIPMSIRKGKLSVRGEVSTFTGKLYIEFVKGYYDNPKVCALYILAGTVDDVPKLQPHPGLEKKEEEEEEEEYDEGSNLKRQTNKNRVQSGPRTPNPYASDNSSLMFPILVAFGVFIPTLFCLCRL.

The N-terminal stretch at 1–30 (MLRPRGAEGTAVALLRLLLLLLLLGPKLRG) is a signal peptide. The Lumenal portion of the chain corresponds to 31 to 268 (PGLGVVGAAG…TPNPYASDNS (238 aa)). Y81, Y103, Y130, F131, and D200 together coordinate a carbohydrate. Positions 220 to 264 (LQPHPGLEKKEEEEEEEEYDEGSNLKRQTNKNRVQSGPRTPNPYA) are disordered. A compositionally biased stretch (acidic residues) spans 230-240 (EEEEEEEEYDE). Residues 244–264 (LKRQTNKNRVQSGPRTPNPYA) are compositionally biased toward polar residues. Residue N267 is glycosylated (N-linked (GlcNAc...) asparagine). The helical transmembrane segment at 269–289 (SLMFPILVAFGVFIPTLFCLC) threads the bilayer. Topologically, residues 290-291 (RL) are cytoplasmic.

The protein belongs to the malectin family. Interacts with the oligosaccharyltransferase (OST) complex.

It localises to the endoplasmic reticulum membrane. Functionally, carbohydrate-binding protein with a strong ligand preference for Glc2-N-glycan. May play a role in the early steps of protein N-glycosylation. The polypeptide is Malectin (Mus musculus (Mouse)).